Reading from the N-terminus, the 112-residue chain is DNA-directed RNA polymerase subunit Rpo11 (112 aa).

This sequence belongs to the archaeal Rpo11/eukaryotic RPB11/RPC19 RNA polymerase subunit family. As to quaternary structure, part of the RNA polymerase complex.

The protein localises to the cytoplasm. The enzyme catalyses RNA(n) + a ribonucleoside 5'-triphosphate = RNA(n+1) + diphosphate. Its function is as follows. DNA-dependent RNA polymerase (RNAP) catalyzes the transcription of DNA into RNA using the four ribonucleoside triphosphates as substrates. The protein is DNA-directed RNA polymerase subunit Rpo11 of Methanopyrus kandleri (strain AV19 / DSM 6324 / JCM 9639 / NBRC 100938).